Consider the following 422-residue polypeptide: MIHYLIFPILLIFFQIIKSSGYYVPANGDDWTILKPPSCKNKLPGQYIDSLPFTFGIVVNPYILNEDGDYEKPIVSKIKPSLTTTTFVTSIITTSTATAPGSKPTKTKDIIVQIHDGQVQKMKHKHDYSSGGGDDDDDDEDCFDEKNIDMAAKRDYQDMNTQEQANEDSGQVLAESDSHQQVVDQNQQINEEEEETQEQQMQEENNNTNEIEDNKVQEFETIEEIYDDIDNNESRPNNSKKYHKKRPHNNYENKHGHKDYHEDHHHNHRYKDHENGHEEDDHKWNKPKPMPEQEEQEQEQEQKPKHEKSEGYESEFVSPVYSVACYTNSTLKMTLTDGILRDSDDRIGCIVSGHQFQFDGPTPQHGAIYAAGWSVTKQGQLALGDSTKFYQCASGDFYNLYDEPIAFQCHPVTLDVVELIEC.

Residues 1–21 (MIHYLIFPILLIFFQIIKSSG) form the signal peptide. 2 disordered regions span residues 116–143 (DGQV…EDCF) and 155–313 (DYQD…EGYE). The segment covering 133–143 (GDDDDDDEDCF) has biased composition (acidic residues). Polar residues predominate over residues 158–169 (DMNTQEQANEDS). Positions 179–214 (HQQVVDQNQQINEEEEETQEQQMQEENNNTNEIEDN) form a coiled coil. 2 stretches are compositionally biased toward low complexity: residues 180-189 (QQVVDQNQQI) and 198-209 (EQQMQEENNNTN). N206 carries N-linked (GlcNAc...) asparagine glycosylation. Residues 220 to 231 (ETIEEIYDDIDN) show a composition bias toward acidic residues. N-linked (GlcNAc...) asparagine glycosylation is found at N232 and N237. A compositionally biased stretch (basic residues) spans 238 to 248 (NSKKYHKKRPH). Basic and acidic residues-rich tracts occupy residues 249–284 (NNYE…DHKW) and 300–311 (QEQKPKHEKSEG). Residue N328 is glycosylated (N-linked (GlcNAc...) asparagine).

It belongs to the PIR protein family. In terms of processing, O-glycosylated. Extensively O-mannosylated.

The protein resides in the secreted. It localises to the cell wall. Probable structural component of the cell wall involved in cell wall integrity and virulence. This is Probable cell wall mannoprotein PIR32 (PIR32) from Candida albicans (strain SC5314 / ATCC MYA-2876) (Yeast).